The following is a 1301-amino-acid chain: DNA-directed RNA polymerase subunit beta (1301 aa).

Belongs to the RNA polymerase beta chain family. The RNAP catalytic core consists of 2 alpha, 1 beta, 1 beta' and 1 omega subunit. When a sigma factor is associated with the core the holoenzyme is formed, which can initiate transcription.

It carries out the reaction RNA(n) + a ribonucleoside 5'-triphosphate = RNA(n+1) + diphosphate. Functionally, DNA-dependent RNA polymerase catalyzes the transcription of DNA into RNA using the four ribonucleoside triphosphates as substrates. This chain is DNA-directed RNA polymerase subunit beta, found in Chlorobium luteolum (strain DSM 273 / BCRC 81028 / 2530) (Pelodictyon luteolum).